The chain runs to 275 residues: 4-hydroxy-3-methylbut-2-enyl diphosphate reductase (275 aa).

Cys12 is a binding site for [4Fe-4S] cluster. Residues His40 and His70 each contribute to the (2E)-4-hydroxy-3-methylbut-2-enyl diphosphate site. 2 residues coordinate dimethylallyl diphosphate: His40 and His70. Isopentenyl diphosphate-binding residues include His40 and His70. Cys92 is a [4Fe-4S] cluster binding site. A (2E)-4-hydroxy-3-methylbut-2-enyl diphosphate-binding site is contributed by His119. Residue His119 coordinates dimethylallyl diphosphate. Position 119 (His119) interacts with isopentenyl diphosphate. Glu121 functions as the Proton donor in the catalytic mechanism. Thr151 lines the (2E)-4-hydroxy-3-methylbut-2-enyl diphosphate pocket. Position 181 (Cys181) interacts with [4Fe-4S] cluster. Residues Ser209, Ser210, Asn211, and Ser251 each coordinate (2E)-4-hydroxy-3-methylbut-2-enyl diphosphate. Positions 209, 210, 211, and 251 each coordinate dimethylallyl diphosphate. Isopentenyl diphosphate is bound by residues Ser209, Ser210, Asn211, and Ser251.

It belongs to the IspH family. The cofactor is [4Fe-4S] cluster.

It carries out the reaction isopentenyl diphosphate + 2 oxidized [2Fe-2S]-[ferredoxin] + H2O = (2E)-4-hydroxy-3-methylbut-2-enyl diphosphate + 2 reduced [2Fe-2S]-[ferredoxin] + 2 H(+). The catalysed reaction is dimethylallyl diphosphate + 2 oxidized [2Fe-2S]-[ferredoxin] + H2O = (2E)-4-hydroxy-3-methylbut-2-enyl diphosphate + 2 reduced [2Fe-2S]-[ferredoxin] + 2 H(+). The protein operates within isoprenoid biosynthesis; dimethylallyl diphosphate biosynthesis; dimethylallyl diphosphate from (2E)-4-hydroxy-3-methylbutenyl diphosphate: step 1/1. It functions in the pathway isoprenoid biosynthesis; isopentenyl diphosphate biosynthesis via DXP pathway; isopentenyl diphosphate from 1-deoxy-D-xylulose 5-phosphate: step 6/6. Functionally, catalyzes the conversion of 1-hydroxy-2-methyl-2-(E)-butenyl 4-diphosphate (HMBPP) into a mixture of isopentenyl diphosphate (IPP) and dimethylallyl diphosphate (DMAPP). Acts in the terminal step of the DOXP/MEP pathway for isoprenoid precursor biosynthesis. The sequence is that of 4-hydroxy-3-methylbut-2-enyl diphosphate reductase from Thermotoga maritima (strain ATCC 43589 / DSM 3109 / JCM 10099 / NBRC 100826 / MSB8).